We begin with the raw amino-acid sequence, 482 residues long: Class E basic helix-loop-helix protein 41 (482 aa).

Lysine 31 is covalently cross-linked (Glycyl lysine isopeptide (Lys-Gly) (interchain with G-Cter in SUMO2)). Positions 44–99 constitute a bHLH domain; sequence TYKLPHRLIEKKRRDRINECIAQLKDLLPEHLKLTTLGHLEKAVVLELTLKHLKAL. Positions 67–71 are necessary for interaction with RXRA and repressor activity towards RXRA; the sequence is LKDLL. Residue lysine 121 forms a Glycyl lysine isopeptide (Lys-Gly) (interchain with G-Cter in SUMO2) linkage. In terms of domain architecture, Orange spans 131–166; sequence FHSGFQTCAKEVLQYLSRFESWTPREPRCVQLINHL. Residue lysine 210 forms a Glycyl lysine isopeptide (Lys-Gly) (interchain with G-Cter in SUMO2) linkage. Disordered regions lie at residues 228–298 and 438–482; these read AELA…GGAA and VAPL…KEAP. Basic and acidic residues predominate over residues 246–256; that stretch reads AEARPDREKGK. Residue lysine 266 forms a Glycyl lysine isopeptide (Lys-Gly) (interchain with G-Cter in SUMO2) linkage. Positions 285–297 are enriched in gly residues; sequence RGGGSGGGPGGGA.

In terms of assembly, homodimer. Heterodimer with BHLHE40/DEC1. Interacts with CIART and BMAL1. Interacts with RXRA. Interacts with NR0B2 and HNF1A. In terms of tissue distribution, highly expressed in skeletal muscle and brain, moderately expressed in pancreas and heart, weakly expressed in placenta, lung, liver and kidney.

The protein resides in the nucleus. Its function is as follows. Transcriptional repressor involved in the regulation of the circadian rhythm by negatively regulating the activity of the clock genes and clock-controlled genes. Acts as the negative limb of a novel autoregulatory feedback loop (DEC loop) which differs from the one formed by the PER and CRY transcriptional repressors (PER/CRY loop). Both these loops are interlocked as it represses the expression of PER1 and in turn is repressed by PER1/2 and CRY1/2. Represses the activity of the circadian transcriptional activator: CLOCK-BMAL1 heterodimer by competing for the binding to E-box elements (5'-CACGTG-3') found within the promoters of its target genes. Negatively regulates its own expression and the expression of DBP and BHLHE41/DEC2. Acts as a corepressor of RXR and the RXR-LXR heterodimers and represses the ligand-induced RXRA/B/G, NR1H3/LXRA, NR1H4 and VDR transactivation activity. Inhibits HNF1A-mediated transactivation of CYP1A2, CYP2E1 AND CYP3A11. This is Class E basic helix-loop-helix protein 41 from Homo sapiens (Human).